The following is a 388-amino-acid chain: Quinolone resistance protein NorA (388 aa).

12 consecutive transmembrane segments (helical) span residues 5-25 (IFVL…VIPV), 42-62 (LLVA…GTLA), 69-89 (LIIC…AVGH), 99-119 (VIGG…IADI), 129-149 (FGYM…IGGF), 157-177 (MPFY…IVLI), 201-221 (WKVF…LSAF), 239-259 (DISI…IYFF), 269-289 (LTFI…LVFA), 293-313 (WSIM…RPAI), 331-351 (LNST…GALF), and 355-375 (IEAP…IVLI).

This sequence belongs to the major facilitator superfamily. TCR/Tet family.

The protein resides in the cell membrane. Its function is as follows. Involved in quinolone resistance. May constitute a membrane-associated active efflux pump of hydrophilic quinolones. This chain is Quinolone resistance protein NorA (norA), found in Staphylococcus aureus (strain COL).